Here is a 99-residue protein sequence, read N- to C-terminus: UPF0235 protein Sbal_3028 (99 aa).

Belongs to the UPF0235 family.

This Shewanella baltica (strain OS155 / ATCC BAA-1091) protein is UPF0235 protein Sbal_3028.